A 627-amino-acid chain; its full sequence is Druantia protein DruC (627 aa).

Its subcellular location is the cytoplasm. Component of antiviral defense system Druantia type I, composed of DruA, DruB, DruC, DruD and DruE. Expression of Druantia in E.coli (strain MG1655) confers resistance to phage lambda, SECphi18, SECphi27 and T4. In Escherichia coli (strain UMEA 4076-1), this protein is Druantia protein DruC.